The following is a 346-amino-acid chain: NADH-ubiquinone oxidoreductase chain 2 (346 aa).

A run of 10 helical transmembrane segments spans residues 3 to 23 (PIIF…VMIS), 25 to 45 (HWLL…PIMM), 67 to 87 (SMLL…WTVM), 96 to 116 (MLMT…FWVP), 122 to 142 (IPLS…MSVL), 145 to 165 (IFPS…ILIG), 200 to 220 (TLLN…MFMA), 238 to 258 (IMTI…PLSG), 273 to 293 (NSII…YFYM), and 324 to 344 (FLPT…MLSV).

The protein belongs to the complex I subunit 2 family. As to quaternary structure, core subunit of respiratory chain NADH dehydrogenase (Complex I) which is composed of 45 different subunits. Interacts with TMEM242.

It localises to the mitochondrion inner membrane. The enzyme catalyses a ubiquinone + NADH + 5 H(+)(in) = a ubiquinol + NAD(+) + 4 H(+)(out). Its function is as follows. Core subunit of the mitochondrial membrane respiratory chain NADH dehydrogenase (Complex I) which catalyzes electron transfer from NADH through the respiratory chain, using ubiquinone as an electron acceptor. Essential for the catalytic activity and assembly of complex I. The chain is NADH-ubiquinone oxidoreductase chain 2 from Bos mutus grunniens (Wild yak).